The following is a 558-amino-acid chain: Kelch-like protein 23 (558 aa).

Residues 36-104 form the BTB domain; the sequence is TDITLQCPSG…AYTSQIEITK (69 aa). A BACK domain is found at 139-240; the sequence is CIGMHSFAEF…DPVYLKTALG (102 aa). Kelch repeat units lie at residues 274–320, 321–369, 370–416, 418–466, 467–508, and 510–557; these read TMYI…CLGP, NIYV…TLGG, CVYA…VLHD, IYVI…PFEN, KLYL…IMNG, and IYVT…CVYN.

The polypeptide is Kelch-like protein 23 (KLHL23) (Homo sapiens (Human)).